A 258-amino-acid chain; its full sequence is Regulatory protein RecX (258 aa).

It belongs to the RecX family.

The protein localises to the cytoplasm. Functionally, modulates RecA activity. This chain is Regulatory protein RecX, found in Streptococcus pneumoniae (strain JJA).